Consider the following 124-residue polypeptide: Large ribosomal subunit protein bL12 (124 aa).

It belongs to the bacterial ribosomal protein bL12 family. Homodimer. Part of the ribosomal stalk of the 50S ribosomal subunit. Forms a multimeric L10(L12)X complex, where L10 forms an elongated spine to which 2 to 4 L12 dimers bind in a sequential fashion. Binds GTP-bound translation factors.

Forms part of the ribosomal stalk which helps the ribosome interact with GTP-bound translation factors. Is thus essential for accurate translation. This Ralstonia pickettii (strain 12J) protein is Large ribosomal subunit protein bL12.